The chain runs to 384 residues: PqqA peptide cyclase (384 aa).

In terms of domain architecture, Radical SAM core spans 5–220 (VGLPLWLLAE…TNEYREKLKA (216 aa)). The [4Fe-4S] cluster site is built by Cys19, Cys23, and Cys26.

This sequence belongs to the radical SAM superfamily. PqqE family. As to quaternary structure, interacts with PqqD. The interaction is necessary for activity of PqqE. [4Fe-4S] cluster serves as cofactor.

The catalysed reaction is [PQQ precursor protein] + S-adenosyl-L-methionine = E-Y cross-linked-[PQQ precursor protein] + 5'-deoxyadenosine + L-methionine + H(+). The protein operates within cofactor biosynthesis; pyrroloquinoline quinone biosynthesis. Functionally, catalyzes the cross-linking of a glutamate residue and a tyrosine residue in the PqqA protein as part of the biosynthesis of pyrroloquinoline quinone (PQQ). The polypeptide is PqqA peptide cyclase (Acinetobacter baumannii (strain SDF)).